The primary structure comprises 107 residues: Thioredoxin 1 (107 aa).

The Thioredoxin domain occupies 2–107 (SAAAQVTDST…TLSQTLEKHL (106 aa)). A disulfide bridge links cysteine 32 with cysteine 35.

Belongs to the thioredoxin family.

Functionally, participates in various redox reactions through the reversible oxidation of its active center dithiol to a disulfide and catalyzes dithiol-disulfide exchange reactions. The sequence is that of Thioredoxin 1 (trxA) from Nostoc sp. (strain PCC 7120 / SAG 25.82 / UTEX 2576).